Reading from the N-terminus, the 114-residue chain is Phosphorelay protein LuxU (114 aa).

Positions 19 to 114 (GSDNVPVLLD…TRDAYRSWTN (96 aa)) constitute an HPt domain. The residue at position 58 (His58) is a Phosphohistidine.

As to quaternary structure, monomer.

Functionally, phosphorelay protein which receives sensory signals from LuxN and LuxP and transmits them to LuxO, at low cell density. LuxN and LuxP transfer a phosphoryl group to LuxU on His-58 and this phosphoryl group is further transferred to LuxO. At high cell density, as LuxU could function to establish an equilibrium between the aspartyl-phosphate of LuxN and the aspartyl-phosphate of LuxO, LuxU transfers phosphate from LuxO to LuxN (and probably LuxP) and finally phosphate is drained from the system. This chain is Phosphorelay protein LuxU (luxU), found in Vibrio harveyi (Beneckea harveyi).